Consider the following 314-residue polypeptide: MGDVNQSVASDFILVGLFSHSGSRQLLFSLVAVMFVIGLLGNTVLLFLIRVDSRLHTPMYFLLSQLSLFDIGCPMVTIPKMASDFLRGEGATSYGGGAAQIFFLTLMGVAEGVLLVLMSYDRYVAVCQPLQYPVLMRRQVCLLMMGSSWVVGVLNASIQTSITLHFPYCASRIVDHFFCEVPALLKLSCADTCAYEMALSTSGVLILMLPLSLIATSYGHVLQAVLSMRSEEARHKAVTTCSSHITVVGLFYGAAVFMYMVPCAYHSPQQDNVVSLFYSLVTPTLNPLIYSLRNPEVWMALVKVLSRAGLRQMC.

Residues 1-25 lie on the Extracellular side of the membrane; it reads MGDVNQSVASDFILVGLFSHSGSRQ. Residue Asn-5 is glycosylated (N-linked (GlcNAc...) asparagine). The chain crosses the membrane as a helical span at residues 26 to 49; sequence LLFSLVAVMFVIGLLGNTVLLFLI. Residues 50 to 57 lie on the Cytoplasmic side of the membrane; sequence RVDSRLHT. Residues 58–79 form a helical membrane-spanning segment; the sequence is PMYFLLSQLSLFDIGCPMVTIP. Over 80–100 the chain is Extracellular; the sequence is KMASDFLRGEGATSYGGGAAQ. A helical membrane pass occupies residues 101–120; sequence IFFLTLMGVAEGVLLVLMSY. Over 121-139 the chain is Cytoplasmic; it reads DRYVAVCQPLQYPVLMRRQ. Residues 140-158 form a helical membrane-spanning segment; that stretch reads VCLLMMGSSWVVGVLNASI. Over 159 to 195 the chain is Extracellular; sequence QTSITLHFPYCASRIVDHFFCEVPALLKLSCADTCAY. Residues 196-219 traverse the membrane as a helical segment; the sequence is EMALSTSGVLILMLPLSLIATSYG. The Cytoplasmic segment spans residues 220 to 236; it reads HVLQAVLSMRSEEARHK. A helical transmembrane segment spans residues 237–259; sequence AVTTCSSHITVVGLFYGAAVFMY. Over 260-272 the chain is Extracellular; sequence MVPCAYHSPQQDN. Residues 273 to 292 form a helical membrane-spanning segment; it reads VVSLFYSLVTPTLNPLIYSL. The Cytoplasmic portion of the chain corresponds to 293–314; it reads RNPEVWMALVKVLSRAGLRQMC.

The protein belongs to the G-protein coupled receptor 1 family.

It is found in the cell membrane. Its function is as follows. Odorant receptor. This is Olfactory receptor 2Z1 (OR2Z1) from Homo sapiens (Human).